Reading from the N-terminus, the 409-residue chain is Tyrosine--tRNA ligase (409 aa).

Residues 43 to 52 (PTAPDLHLGH) carry the 'HIGH' region motif. Positions 227 to 231 (KMSKS) match the 'KMSKS' region motif. Lys-230 serves as a coordination point for ATP. Residues 338–399 (LALPQLLKLA…GKRKFAKVTL (62 aa)) form the S4 RNA-binding domain.

The protein belongs to the class-I aminoacyl-tRNA synthetase family. TyrS type 2 subfamily. In terms of assembly, homodimer.

It localises to the cytoplasm. The enzyme catalyses tRNA(Tyr) + L-tyrosine + ATP = L-tyrosyl-tRNA(Tyr) + AMP + diphosphate + H(+). In terms of biological role, catalyzes the attachment of tyrosine to tRNA(Tyr) in a two-step reaction: tyrosine is first activated by ATP to form Tyr-AMP and then transferred to the acceptor end of tRNA(Tyr). The protein is Tyrosine--tRNA ligase of Nitrosomonas europaea (strain ATCC 19718 / CIP 103999 / KCTC 2705 / NBRC 14298).